The sequence spans 440 residues: MANVIVVGAQWGDEGKGKITDLLSVSADVVVRYQGGINAGHTVCVGEQTFKLHLIPSGILYPETCCVIASGTVVDPKVLLEEIRHLEELGISTKNLFIAETAHVTMPYHRLIDIAEEERRGKNRIGTTGRGIGPTYADKSGRTGFRVLDLMQPEGFREKLEWIVPLKNVLLERLYNLPPLAVDQVAEQYLAYAEQLRPYVIDASLLIDQAVRTHRNILFEGAQGTLLDLDHGTYPYVTSSNPVAGGACVGAGVGPTIIDRVIGVAKAYTTRVGEGPFPTELRDEVGRHLGERGAEFGTTTGRPRRCGWFDAVIGRYAVRINGLDCLAITKLDVLDELESIKVCVAYHCPSKTVEEFPSDANLFGRCEPVYETLPGWKEPTGHCRTLEELPPKARDYLEFLAHQMKTPIALVSVGANREQTIIVEDPIHGPKRGLLGHNGD.

GTP contacts are provided by residues 12–18 (GDEGKGK) and 40–42 (GHT). The active-site Proton acceptor is Asp13. Residues Asp13 and Gly40 each contribute to the Mg(2+) site. IMP is bound by residues 13-16 (DEGK), 38-41 (NAGH), Thr128, Arg142, Gln223, Thr238, and Arg302. Catalysis depends on His41, which acts as the Proton donor. 298 to 304 (TTTGRPR) contacts substrate. Residues Arg304, 330 to 332 (KLD), and 412 to 414 (SVG) contribute to the GTP site.

It belongs to the adenylosuccinate synthetase family. In terms of assembly, homodimer. Requires Mg(2+) as cofactor.

The protein localises to the cytoplasm. It catalyses the reaction IMP + L-aspartate + GTP = N(6)-(1,2-dicarboxyethyl)-AMP + GDP + phosphate + 2 H(+). Its pathway is purine metabolism; AMP biosynthesis via de novo pathway; AMP from IMP: step 1/2. In terms of biological role, plays an important role in the de novo pathway of purine nucleotide biosynthesis. Catalyzes the first committed step in the biosynthesis of AMP from IMP. In Gloeobacter violaceus (strain ATCC 29082 / PCC 7421), this protein is Adenylosuccinate synthetase.